The primary structure comprises 183 residues: uncharacterized protein (183 aa).

Belongs to the asfivirus S183L family.

This is an uncharacterized protein from Ornithodoros (relapsing fever ticks).